The primary structure comprises 34 residues: KNILTVEQPDSSSSDGIFYYDEASKRVQISALAL.

The protein belongs to the peptidase M67A family. CSN5 subfamily. As to quaternary structure, component of the CSN complex, probably composed of CSN1, CSN2, CSN3, CSN4, CSN5 (CSN5A or CSN5B), CSN6 (CSN6A or CSN6B), CSN7 and CSN8. A divalent metal cation serves as cofactor.

It is found in the cytoplasm. Its subcellular location is the nucleus. In terms of biological role, probable protease subunit of the COP9 signalosome complex (CSN), a complex involved in various cellular and developmental processes such as photomorphogenesis and auxin and jasmonate responses. The CSN complex is an essential regulator of the ubiquitin (Ubl) conjugation pathway by mediating the deneddylation of the cullin subunits of the SCF-type E3 ligase complexes, leading to decrease the Ubl ligase activity of SCF. In the complex, it probably acts as the catalytic center that mediates the cleavage of Nedd8 from cullins. It however has no metalloprotease activity by itself and requires the other subunits of the CSN complex. The CSN complex is involved in repression of photomorphogenesis in darkness by regulating the activity of COP1-containing Ubl ligase complexes. This chain is COP9 signalosome complex subunit 5a (CSN5A), found in Brassica oleracea (Wild cabbage).